The chain runs to 357 residues: Phosphoribosylformylglycinamidine cyclo-ligase (357 aa).

The protein belongs to the AIR synthase family.

The protein resides in the cytoplasm. It carries out the reaction 2-formamido-N(1)-(5-O-phospho-beta-D-ribosyl)acetamidine + ATP = 5-amino-1-(5-phospho-beta-D-ribosyl)imidazole + ADP + phosphate + H(+). The protein operates within purine metabolism; IMP biosynthesis via de novo pathway; 5-amino-1-(5-phospho-D-ribosyl)imidazole from N(2)-formyl-N(1)-(5-phospho-D-ribosyl)glycinamide: step 2/2. The protein is Phosphoribosylformylglycinamidine cyclo-ligase of Nitrobacter winogradskyi (strain ATCC 25391 / DSM 10237 / CIP 104748 / NCIMB 11846 / Nb-255).